The chain runs to 257 residues: Transcription factor MYB4 (257 aa).

HTH myb-type domains are found at residues 9 to 61 (KMGL…INYL) and 62 to 116 (RPDI…KKRL). 2 consecutive DNA-binding regions (H-T-H motif) follow at residues 37–61 (WRAL…INYL) and 89–112 (WSAI…HTHL). Residues 115-179 (RLDAPAQGGH…VAEEHGNAGI (65 aa)) are disordered. The span at 130–140 (GKKHKKPKSAK) shows a compositional bias: basic residues. Positions 141–170 (KPAAAAAAPPASPERSASSSVTESSMASSV) are enriched in low complexity.

It localises to the nucleus. Its function is as follows. Transcriptional activator involved in cold stress response. Regulates positively the expression of genes involved in reactive oxygen species (ROS) scavenging such as peroxidase and superoxide dismutase during cold stress. Transactivates a complex gene network that have major effects on stress tolerance and panicle development. This is Transcription factor MYB4 from Oryza sativa subsp. japonica (Rice).